Consider the following 388-residue polypeptide: MNLHEYQAKQIFAEYQLPVGKGYACKSADEAADAIKKLNGDVWVAKCQVHAGGRGKAGGVKLVRNEAEVRAFADQWLGQRLVTFQTDVNGQPVNTLYVEEGSSIARELYLGAVLDRASQRVVFMVSTEGGVNIEEVAEKTPHLLHKMAIDPLTGGMPYQGRELAFKLGLKGDQIKQFAHIFVQMAKMFVEKDLALLEVNPLVVTKEGNLLCLDAKIVVDSNALYRQPALKAMQDPSQEDPREALAESHQLNYVALEGNIGCMVNGAGLAMGTMDIIKLHGGQPANFLDVGGGATKERVAEAFKIILSDSAVKAVLVNIFGGIVRCDLIAEGIIAAVNEVGVNVPVVVRLEGNNAPLGREILANSGVNIIAANTLTDAAIQAVKAAEGK.

Residues 9-244 (KQIFAEYQLP…PSQEDPREAL (236 aa)) enclose the ATP-grasp domain. ATP-binding positions include Lys46, 53–55 (GRG), Glu99, Ser102, and Glu107. 2 residues coordinate Mg(2+): Asn199 and Asp213. Residues Asn264 and 321-323 (GIV) contribute to the substrate site.

This sequence belongs to the succinate/malate CoA ligase beta subunit family. As to quaternary structure, heterotetramer of two alpha and two beta subunits. Mg(2+) is required as a cofactor.

It catalyses the reaction succinate + ATP + CoA = succinyl-CoA + ADP + phosphate. It carries out the reaction GTP + succinate + CoA = succinyl-CoA + GDP + phosphate. Its pathway is carbohydrate metabolism; tricarboxylic acid cycle; succinate from succinyl-CoA (ligase route): step 1/1. In terms of biological role, succinyl-CoA synthetase functions in the citric acid cycle (TCA), coupling the hydrolysis of succinyl-CoA to the synthesis of either ATP or GTP and thus represents the only step of substrate-level phosphorylation in the TCA. The beta subunit provides nucleotide specificity of the enzyme and binds the substrate succinate, while the binding sites for coenzyme A and phosphate are found in the alpha subunit. This is Succinate--CoA ligase [ADP-forming] subunit beta from Pasteurella multocida (strain Pm70).